A 131-amino-acid chain; its full sequence is uncharacterized protein (131 aa).

This is an uncharacterized protein from Staphylococcus aureus.